A 364-amino-acid chain; its full sequence is Isoflavone 4'-O-methyltransferase (364 aa).

Residues 206-209 (VGGG), aspartate 230, 230-231 (DQ), 250-251 (DM), and lysine 264 each bind S-adenosyl-L-methionine. Residue histidine 268 is the Proton acceptor of the active site.

The protein belongs to the class I-like SAM-binding methyltransferase superfamily. Cation-independent O-methyltransferase family. COMT subfamily. Homodimer.

The catalysed reaction is a 4'-hydroxyisoflavone + S-adenosyl-L-methionine = a 4'-methoxyisoflavone + S-adenosyl-L-homocysteine + H(+). The enzyme catalyses (2R,3S)-2,4',7-trihydroxyisoflavanone + S-adenosyl-L-methionine = (2R,3S)-2,7-dihydroxy-4'-methoxyisoflavanone + S-adenosyl-L-homocysteine + H(+). 2-hydroxyisoflavanone 4'-O-methyltransferase involved in the biosynthesis of the phytoalexin medicarpin. Has also an in vitro (+)-6a-hydroxymaackiain-3-0-methyltransferase activity, converting the pterocarpan 6a-hydroxymaackiain into pisatin. No activity with di- or trihydroxylated isoflavones, including daidzein and genistein, or with (-)-medicarpin and maackiain. The dual activity for either 3- or 4'-O-methylation depends upon substrate availability. The sequence is that of Isoflavone 4'-O-methyltransferase (HI4'OMT) from Medicago truncatula (Barrel medic).